Reading from the N-terminus, the 118-residue chain is Aspartate 1-decarboxylase (118 aa).

The Schiff-base intermediate with substrate; via pyruvic acid role is filled by serine 25. Serine 25 carries the post-translational modification Pyruvic acid (Ser). Threonine 57 serves as a coordination point for substrate. The active-site Proton donor is tyrosine 58. Glycine 73–alanine 75 contacts substrate.

The protein belongs to the PanD family. In terms of assembly, heterooctamer of four alpha and four beta subunits. The cofactor is pyruvate. In terms of processing, is synthesized initially as an inactive proenzyme, which is activated by self-cleavage at a specific serine bond to produce a beta-subunit with a hydroxyl group at its C-terminus and an alpha-subunit with a pyruvoyl group at its N-terminus.

The protein resides in the cytoplasm. The enzyme catalyses L-aspartate + H(+) = beta-alanine + CO2. It functions in the pathway cofactor biosynthesis; (R)-pantothenate biosynthesis; beta-alanine from L-aspartate: step 1/1. In terms of biological role, catalyzes the pyruvoyl-dependent decarboxylation of aspartate to produce beta-alanine. The polypeptide is Aspartate 1-decarboxylase (Porphyromonas gingivalis (strain ATCC 33277 / DSM 20709 / CIP 103683 / JCM 12257 / NCTC 11834 / 2561)).